Here is a 65-residue protein sequence, read N- to C-terminus: Large ribosomal subunit protein uL29 (65 aa).

The protein belongs to the universal ribosomal protein uL29 family.

This chain is Large ribosomal subunit protein uL29, found in Buchnera aphidicola subsp. Cinara cedri (strain Cc).